Consider the following 449-residue polypeptide: UDP-N-acetylmuramoylalanine--D-glutamate ligase (449 aa).

118–124 (GTNGKTT) contributes to the ATP binding site.

The protein belongs to the MurCDEF family.

Its subcellular location is the cytoplasm. It carries out the reaction UDP-N-acetyl-alpha-D-muramoyl-L-alanine + D-glutamate + ATP = UDP-N-acetyl-alpha-D-muramoyl-L-alanyl-D-glutamate + ADP + phosphate + H(+). It functions in the pathway cell wall biogenesis; peptidoglycan biosynthesis. Its function is as follows. Cell wall formation. Catalyzes the addition of glutamate to the nucleotide precursor UDP-N-acetylmuramoyl-L-alanine (UMA). The polypeptide is UDP-N-acetylmuramoylalanine--D-glutamate ligase (Staphylococcus epidermidis (strain ATCC 35984 / DSM 28319 / BCRC 17069 / CCUG 31568 / BM 3577 / RP62A)).